The primary structure comprises 161 residues: P18 protein (161 aa).

In Lepidoptera (butterflies and moths), this protein is P18 protein (P18).